The chain runs to 906 residues: Protein translocase subunit SecA (906 aa).

ATP-binding positions include Gln86, Gly104–Thr108, and Asp511. The span at Glu852–Asp888 shows a compositional bias: basic and acidic residues. The segment at Glu852–Glu906 is disordered. Zn(2+)-binding residues include Cys890, Cys892, Cys901, and His902. Positions Lys896–Glu906 are enriched in basic residues.

This sequence belongs to the SecA family. In terms of assembly, monomer and homodimer. Part of the essential Sec protein translocation apparatus which comprises SecA, SecYEG and auxiliary proteins SecDF-YajC and YidC. It depends on Zn(2+) as a cofactor.

Its subcellular location is the cell inner membrane. It is found in the cytoplasm. It catalyses the reaction ATP + H2O + cellular proteinSide 1 = ADP + phosphate + cellular proteinSide 2.. In terms of biological role, part of the Sec protein translocase complex. Interacts with the SecYEG preprotein conducting channel. Has a central role in coupling the hydrolysis of ATP to the transfer of proteins into and across the cell membrane, serving both as a receptor for the preprotein-SecB complex and as an ATP-driven molecular motor driving the stepwise translocation of polypeptide chains across the membrane. This is Protein translocase subunit SecA from Francisella tularensis subsp. tularensis (strain SCHU S4 / Schu 4).